Reading from the N-terminus, the 60-residue chain is Cytotoxin 1 (60 aa).

Cystine bridges form between cysteine 3–cysteine 21, cysteine 14–cysteine 38, cysteine 42–cysteine 53, and cysteine 54–cysteine 59.

The protein belongs to the three-finger toxin family. Short-chain subfamily. Type IA cytotoxin sub-subfamily. Monomer in solution; Homodimer and oligomer in the presence of negatively charged lipids forming a pore with a size ranging between 20 and 30 Angstroms. Expressed by the venom gland.

The protein localises to the secreted. Its subcellular location is the target cell membrane. In terms of biological role, shows cytolytic activity on many different cells by forming pore in lipid membranes. In vivo, increases heart rate or kills the animal by cardiac arrest. In addition, it binds to heparin with high affinity, interacts with Kv channel-interacting protein 1 (KCNIP1) in a calcium-independent manner, and binds to integrin alpha-V/beta-3 (ITGAV/ITGB3) with moderate affinity. This Naja naja (Indian cobra) protein is Cytotoxin 1.